We begin with the raw amino-acid sequence, 161 residues long: Large ribosomal subunit protein uL15 (161 aa).

A disordered region spans residues 1–39; that stretch reads MTKLNELAPREGSTKGRMRVGRGPGSGKGKTAGRGVKGQ. The span at 22 to 36 shows a compositional bias: gly residues; that stretch reads RGPGSGKGKTAGRGV.

Belongs to the universal ribosomal protein uL15 family. As to quaternary structure, part of the 50S ribosomal subunit.

Binds to the 23S rRNA. The polypeptide is Large ribosomal subunit protein uL15 (Caulobacter vibrioides (strain ATCC 19089 / CIP 103742 / CB 15) (Caulobacter crescentus)).